The sequence spans 457 residues: Ribulose bisphosphate carboxylase large chain (457 aa).

A propeptide spanning residues 1–2 is cleaved from the precursor; it reads MS. Pro-3 is modified (N-acetylproline). An N6,N6,N6-trimethyllysine modification is found at Lys-14. Substrate contacts are provided by Asn-123 and Thr-173. Catalysis depends on Lys-175, which acts as the Proton acceptor. Lys-177 contributes to the substrate binding site. Mg(2+) is bound by residues Lys-201, Asp-203, and Glu-204. The residue at position 201 (Lys-201) is an N6-carboxylysine. Catalysis depends on His-294, which acts as the Proton acceptor. Positions 295, 327, and 379 each coordinate substrate.

The protein belongs to the RuBisCO large chain family. Type I subfamily. As to quaternary structure, heterohexadecamer of 8 large chains and 8 small chains; disulfide-linked. The disulfide link is formed within the large subunit homodimers. It depends on Mg(2+) as a cofactor. In terms of processing, the disulfide bond which can form in the large chain dimeric partners within the hexadecamer appears to be associated with oxidative stress and protein turnover.

It is found in the plastid. It localises to the chloroplast. It catalyses the reaction 2 (2R)-3-phosphoglycerate + 2 H(+) = D-ribulose 1,5-bisphosphate + CO2 + H2O. The enzyme catalyses D-ribulose 1,5-bisphosphate + O2 = 2-phosphoglycolate + (2R)-3-phosphoglycerate + 2 H(+). RuBisCO catalyzes two reactions: the carboxylation of D-ribulose 1,5-bisphosphate, the primary event in carbon dioxide fixation, as well as the oxidative fragmentation of the pentose substrate in the photorespiration process. Both reactions occur simultaneously and in competition at the same active site. The sequence is that of Ribulose bisphosphate carboxylase large chain from Phelline comosa.